Consider the following 172-residue polypeptide: Adenine phosphoribosyltransferase (172 aa).

Belongs to the purine/pyrimidine phosphoribosyltransferase family. Homodimer.

It localises to the cytoplasm. It catalyses the reaction AMP + diphosphate = 5-phospho-alpha-D-ribose 1-diphosphate + adenine. The protein operates within purine metabolism; AMP biosynthesis via salvage pathway; AMP from adenine: step 1/1. Its function is as follows. Catalyzes a salvage reaction resulting in the formation of AMP, that is energically less costly than de novo synthesis. The polypeptide is Adenine phosphoribosyltransferase (Streptococcus equi subsp. zooepidemicus (strain H70)).